We begin with the raw amino-acid sequence, 265 residues long: Thiazole synthase (265 aa).

Lys-106 acts as the Schiff-base intermediate with DXP in catalysis. 1-deoxy-D-xylulose 5-phosphate contacts are provided by residues Gly-167, 193-194 (AG), and 215-216 (NT). The tract at residues 245 to 265 (GRIPRRARAEPSSPQLGLVGS) is disordered.

The protein belongs to the ThiG family. In terms of assembly, homotetramer. Forms heterodimers with either ThiH or ThiS.

It is found in the cytoplasm. The enzyme catalyses [ThiS sulfur-carrier protein]-C-terminal-Gly-aminoethanethioate + 2-iminoacetate + 1-deoxy-D-xylulose 5-phosphate = [ThiS sulfur-carrier protein]-C-terminal Gly-Gly + 2-[(2R,5Z)-2-carboxy-4-methylthiazol-5(2H)-ylidene]ethyl phosphate + 2 H2O + H(+). Its pathway is cofactor biosynthesis; thiamine diphosphate biosynthesis. Its function is as follows. Catalyzes the rearrangement of 1-deoxy-D-xylulose 5-phosphate (DXP) to produce the thiazole phosphate moiety of thiamine. Sulfur is provided by the thiocarboxylate moiety of the carrier protein ThiS. In vitro, sulfur can be provided by H(2)S. The polypeptide is Thiazole synthase (Methylobacterium sp. (strain 4-46)).